Consider the following 450-residue polypeptide: Phosphoglucosamine mutase (450 aa).

S102 functions as the Phosphoserine intermediate in the catalytic mechanism. Mg(2+) is bound by residues S102, D243, D245, and D247. Residue S102 is modified to Phosphoserine.

Belongs to the phosphohexose mutase family. Mg(2+) is required as a cofactor. In terms of processing, activated by phosphorylation.

It catalyses the reaction alpha-D-glucosamine 1-phosphate = D-glucosamine 6-phosphate. Its function is as follows. Catalyzes the conversion of glucosamine-6-phosphate to glucosamine-1-phosphate. The chain is Phosphoglucosamine mutase from Rhizobium meliloti (strain 1021) (Ensifer meliloti).